Reading from the N-terminus, the 256-residue chain is Thiazole synthase (256 aa).

Lysine 98 acts as the Schiff-base intermediate with DXP in catalysis. 1-deoxy-D-xylulose 5-phosphate contacts are provided by residues glycine 159, 185–186, and 207–208; these read AG and NT.

Belongs to the ThiG family. As to quaternary structure, homotetramer. Forms heterodimers with either ThiH or ThiS.

Its subcellular location is the cytoplasm. It carries out the reaction [ThiS sulfur-carrier protein]-C-terminal-Gly-aminoethanethioate + 2-iminoacetate + 1-deoxy-D-xylulose 5-phosphate = [ThiS sulfur-carrier protein]-C-terminal Gly-Gly + 2-[(2R,5Z)-2-carboxy-4-methylthiazol-5(2H)-ylidene]ethyl phosphate + 2 H2O + H(+). Its pathway is cofactor biosynthesis; thiamine diphosphate biosynthesis. Functionally, catalyzes the rearrangement of 1-deoxy-D-xylulose 5-phosphate (DXP) to produce the thiazole phosphate moiety of thiamine. Sulfur is provided by the thiocarboxylate moiety of the carrier protein ThiS. In vitro, sulfur can be provided by H(2)S. The sequence is that of Thiazole synthase from Aliivibrio salmonicida (strain LFI1238) (Vibrio salmonicida (strain LFI1238)).